A 478-amino-acid chain; its full sequence is Probable cytosolic Fe-S cluster assembly factor AAEL012261 (478 aa).

[4Fe-4S] cluster-binding residues include C23, C69, C72, C75, C189, C245, C396, and C400.

The protein belongs to the NARF family.

In terms of biological role, component of the cytosolic iron-sulfur (Fe/S) protein assembly machinery. Required for maturation of extramitochondrial Fe/S proteins. This is Probable cytosolic Fe-S cluster assembly factor AAEL012261 from Aedes aegypti (Yellowfever mosquito).